Reading from the N-terminus, the 1288-residue chain is 5-oxoprolinase (1288 aa).

At Thr-151 the chain carries Phosphothreonine. The tract at residues 1249 to 1269 (GGGGYGDPEDPAPLPGSPLQP) is disordered. Ser-1265 carries the post-translational modification Phosphoserine.

It belongs to the oxoprolinase family. As to quaternary structure, homodimer. In terms of tissue distribution, expressed in coronary artery and kidney.

Its subcellular location is the cytoplasm. The protein localises to the cytosol. The enzyme catalyses 5-oxo-L-proline + ATP + 2 H2O = L-glutamate + ADP + phosphate + H(+). Catalyzes the cleavage of 5-oxo-L-proline to form L-glutamate coupled to the hydrolysis of ATP to ADP and inorganic phosphate. The sequence is that of 5-oxoprolinase (OPLAH) from Bos taurus (Bovine).